The chain runs to 105 residues: Small ribosomal subunit protein uS10 (105 aa).

This sequence belongs to the universal ribosomal protein uS10 family. In terms of assembly, part of the 30S ribosomal subunit.

Functionally, involved in the binding of tRNA to the ribosomes. In Nostoc punctiforme (strain ATCC 29133 / PCC 73102), this protein is Small ribosomal subunit protein uS10.